The sequence spans 756 residues: Xylosyl- and glucuronyltransferase LARGE1 (756 aa).

The Cytoplasmic portion of the chain corresponds to 1-10; the sequence is MLGICRGRRK. Residues 11–31 traverse the membrane as a helical; Signal-anchor for type II membrane protein segment; it reads FLAASLTLLCIPAITWIYLFA. At 32 to 756 the chain is on the lumenal side; that stretch reads GSFEDGKPVS…LKYLTAENNS (725 aa). 2 disordered regions span residues 43–64 and 82–108; these read SPLESQAHSPRYTASSQRERES and QLSLAQGQSPAHHRGNHSKTYSMEEGT. Over residues 44 to 58 the composition is skewed to polar residues; that stretch reads PLESQAHSPRYTASS. Residues 53 to 95 are a coiled coil; it reads RYTASSQRERESLEVRVREVEEENRALRRQLSLAQGQSPAHHR. N-linked (GlcNAc...) asparagine glycans are attached at residues N97, N122, and N148. The segment at 138 to 413 is xylosyltransferase activity; sequence IHVAIVCAGY…FLEYDGNLLR (276 aa). Residues D242 and D244 each contribute to the Mn(2+) site. N-linked (GlcNAc...) asparagine glycosylation is present at N272. A glucuronyltransferase activity region spans residues 414 to 756; sequence RELFGCPSET…LKYLTAENNS (343 aa). 2 residues coordinate Mn(2+): D563 and D565.

In the C-terminal section; belongs to the glycosyltransferase 49 family. The protein in the N-terminal section; belongs to the glycosyltransferase 8 family. As to quaternary structure, interacts with DAG1 (via the N-terminal domain of alpha-DAG1); the interaction increases binding of DAG1 to laminin. Interacts with B4GAT1. Requires Mn(2+) as cofactor. Ubiquitous. Highest expression in heart, diaphragm and brain, where it is especially found in cerebral cortex, hippocampus, and trigeminal ganglion.

It localises to the golgi apparatus membrane. It catalyses the reaction 3-O-[beta-D-GlcA-(1-&gt;3)-beta-D-Xyl-(1-&gt;4)-Rib-ol-P-Rib-ol-P-3-beta-D-GalNAc-(1-&gt;3)-beta-D-GlcNAc-(1-&gt;4)-(O-6-P-alpha-D-Man)]-Thr-[protein] + UDP-alpha-D-xylose = 3-O-[alpha-D-Xyl-(1-&gt;3)-beta-D-GlcA-(1-&gt;4)-beta-D-Xyl-(1-&gt;4)-Rib-ol-P-Rib-ol-P-3-beta-D-GalNAc-(1-&gt;3)-beta-D-GlcNAc-(1-&gt;4)-(O-6-P-alpha-D-Man)]-Thr-[protein] + UDP + H(+). It carries out the reaction 3-O-{(1-&gt;[3)-alpha-D-Xyl-(1-&gt;3)-beta-D-GlcA-(1-&gt;](n)-4)-beta-D-Xyl-(1-&gt;4)-Rib-ol-P-Rib-ol-P-3-beta-D-GalNAc-(1-&gt;3)-beta-D-GlcNAc-(1-&gt;4)-O-6-P-alpha-D-Man}-L-Thr-[protein] + UDP-alpha-D-glucuronate = 3-O-{beta-D-GlcA-(1-&gt;[3)-alpha-D-Xyl-(1-&gt;3)-beta-D-GlcA-(1-&gt;](n)-4)-beta-D-Xyl-(1-&gt;4)-Rib-ol-P-Rib-ol-P-3-beta-D-GalNAc-(1-&gt;3)-beta-D-GlcNAc-(1-&gt;4)-O-6-P-alpha-D-Man}-L-Thr-[protein] + UDP + H(+). The catalysed reaction is 3-O-{beta-D-GlcA-(1-&gt;[3)-alpha-D-Xyl-(1-&gt;3)-beta-D-GlcA-(1-&gt;](n)-4)-beta-D-Xyl-(1-&gt;4)-Rib-ol-P-Rib-ol-P-3-beta-D-GalNAc-(1-&gt;3)-beta-D-GlcNAc-(1-&gt;4)-O-6-P-alpha-D-Man}-L-Thr-[protein] + UDP-alpha-D-xylose = 3-O-{(1-&gt;[3)-alpha-D-Xyl-(1-&gt;3)-beta-D-GlcA-(1-&gt;](n+1)-4)-beta-D-Xyl-(1-&gt;4)-Rib-ol-P-Rib-ol-P-3-beta-D-GalNAc-(1-&gt;3)-beta-D-GlcNAc-(1-&gt;4)-O-6-P-alpha-D-Man}-L-Thr-[protein] + UDP + H(+). It functions in the pathway protein modification; protein glycosylation. Functionally, bifunctional glycosyltransferase with both alpha-1,3-xylosyltransferase and beta-1,3-glucuronyltransferase activities involved in the maturation of alpha-dystroglycan (DAG1) by glycosylation leading to DAG1 binding to laminin G-like domain-containing extracellular proteins with high affinity. Elongates the glucuronyl-beta-1,4-xylose-beta disaccharide primer structure initiated by B4GAT1 by adding repeating units [-3-Xylose-alpha-1,3-GlcA-beta-1-] to produce a heteropolysaccharide. Requires the phosphorylation of core M3 (O-mannosyl trisaccharide) by POMK to elongate the glucuronyl-beta-1,4-xylose-beta disaccharide primer. Plays a key role in skeletal muscle function and regeneration. This is Xylosyl- and glucuronyltransferase LARGE1 from Mus musculus (Mouse).